Reading from the N-terminus, the 272-residue chain is tRNA pseudouridine synthase A (272 aa).

Catalysis depends on D52, which acts as the Nucleophile. Residue Y110 participates in substrate binding.

It belongs to the tRNA pseudouridine synthase TruA family. As to quaternary structure, homodimer.

The enzyme catalyses uridine(38/39/40) in tRNA = pseudouridine(38/39/40) in tRNA. Its function is as follows. Formation of pseudouridine at positions 38, 39 and 40 in the anticodon stem and loop of transfer RNAs. This is tRNA pseudouridine synthase A from Cupriavidus taiwanensis (strain DSM 17343 / BCRC 17206 / CCUG 44338 / CIP 107171 / LMG 19424 / R1) (Ralstonia taiwanensis (strain LMG 19424)).